We begin with the raw amino-acid sequence, 344 residues long: 4-hydroxy-2-oxovalerate aldolase (344 aa).

Residues Val-8–Met-260 form the Pyruvate carboxyltransferase domain. Arg-16 to Asp-17 is a binding site for substrate. Asp-17 provides a ligand contact to Mn(2+). Catalysis depends on His-20, which acts as the Proton acceptor. Ser-170 and His-199 together coordinate substrate. Mn(2+) contacts are provided by His-199 and His-201. Residue Tyr-290 coordinates substrate.

This sequence belongs to the 4-hydroxy-2-oxovalerate aldolase family.

It catalyses the reaction (S)-4-hydroxy-2-oxopentanoate = acetaldehyde + pyruvate. In Pseudoalteromonas translucida (strain TAC 125), this protein is 4-hydroxy-2-oxovalerate aldolase (mhpE).